Reading from the N-terminus, the 401-residue chain is Coenzyme A biosynthesis bifunctional protein CoaBC (401 aa).

The phosphopantothenoylcysteine decarboxylase stretch occupies residues 1-190 (MQTLAGKKIL…FQPKPLQDKS (190 aa)). Cys-159 serves as the catalytic Proton donor. The segment at 191 to 401 (ILITAGPTRE…LKQIQTLMGH (211 aa)) is phosphopantothenate--cysteine ligase. Residues Asp-279, Lys-289, 307–310 (PDIV), Phe-326, Lys-340, and Lys-344 each bind CTP.

The protein in the N-terminal section; belongs to the HFCD (homo-oligomeric flavin containing Cys decarboxylase) superfamily. It in the C-terminal section; belongs to the PPC synthetase family. Mg(2+) serves as cofactor. The cofactor is FMN.

The catalysed reaction is N-[(R)-4-phosphopantothenoyl]-L-cysteine + H(+) = (R)-4'-phosphopantetheine + CO2. The enzyme catalyses (R)-4'-phosphopantothenate + L-cysteine + CTP = N-[(R)-4-phosphopantothenoyl]-L-cysteine + CMP + diphosphate + H(+). Its pathway is cofactor biosynthesis; coenzyme A biosynthesis; CoA from (R)-pantothenate: step 2/5. It functions in the pathway cofactor biosynthesis; coenzyme A biosynthesis; CoA from (R)-pantothenate: step 3/5. Functionally, catalyzes two sequential steps in the biosynthesis of coenzyme A. In the first step cysteine is conjugated to 4'-phosphopantothenate to form 4-phosphopantothenoylcysteine. In the second step the latter compound is decarboxylated to form 4'-phosphopantotheine. This chain is Coenzyme A biosynthesis bifunctional protein CoaBC, found in Vibrio vulnificus (strain YJ016).